The sequence spans 303 residues: Lysosomal amino acid transporter 1 homolog (303 aa).

The Lumenal portion of the chain corresponds to 1-38 (MAEGLRAPPPPGNGSECPDGARWVLRLLGECARDGRDV). N-linked (GlcNAc...) asparagine glycosylation occurs at asparagine 13. Residues 36-102 (RDVGSALLGL…LANQLPLQVY (67 aa)) enclose the PQ-loop 1 domain. Residues 39 to 59 (GSALLGLLSIGCFAAAALPQF) traverse the membrane as a helical segment. Topologically, residues 60-73 (YQACKTGIMDRALS) are cytoplasmic. A helical transmembrane segment spans residues 74 to 94 (IYFLLGWLGGDLLNLIGSFLA). Residues 95–96 (NQ) lie on the Lumenal side of the membrane. Residues 97 to 117 (LPLQVYTAVYYVLADLVMLSL) traverse the membrane as a helical segment. Residues 118 to 131 (YGYYKAKNWGTGAT) are Cytoplasmic-facing. The chain crosses the membrane as a helical span at residues 132–152 (ASINAACLFCLLGTATTLTVL). Over 153–182 (SHDTGPAPNPAAFGGRSLLSLGLEGPGPEP) the chain is Lumenal. Residues 183–203 (ISKTEIIGFAIGSISSVLYLC) form a helical membrane-spanning segment. A PQ-loop 2 domain is found at 186–251 (TEIIGFAIGS…LKNPEPGQSE (66 aa)). Topologically, residues 204–220 (SRLPQIYTNYRRKSTAG) are cytoplasmic. Residues 221–241 (VSFLLFALVMLGNLLYGTSVL) traverse the membrane as a helical segment. The Lumenal segment spans residues 242–260 (LKNPEPGQSEGDYILHHLP). A helical transmembrane segment spans residues 261–281 (WLIGSLGVLSLDVIISFQFLA). Residues 282 to 303 (YRTGQPSAGEEREALLAEHGDS) are Cytoplasmic-facing. Residues 296–297 (LL) carry the Di-leucine motif motif.

The protein belongs to the laat-1 family.

It localises to the lysosome membrane. In terms of biological role, amino acid transporter that specifically mediates the pH-dependent export of the cationic amino acids arginine, histidine and lysine from lysosomes. The polypeptide is Lysosomal amino acid transporter 1 homolog (SLC66A1) (Gallus gallus (Chicken)).